Reading from the N-terminus, the 208-residue chain is Probable adenylyl-sulfate kinase (208 aa).

38–45 (GLSGSGKS) lines the ATP pocket. S112 functions as the Phosphoserine intermediate in the catalytic mechanism.

Belongs to the APS kinase family.

The enzyme catalyses adenosine 5'-phosphosulfate + ATP = 3'-phosphoadenylyl sulfate + ADP + H(+). It participates in sulfur metabolism; hydrogen sulfide biosynthesis; sulfite from sulfate: step 2/3. In terms of biological role, catalyzes the synthesis of activated sulfate. The polypeptide is Probable adenylyl-sulfate kinase (Halalkalibacterium halodurans (strain ATCC BAA-125 / DSM 18197 / FERM 7344 / JCM 9153 / C-125) (Bacillus halodurans)).